Here is a 505-residue protein sequence, read N- to C-terminus: Glycerol kinase (505 aa).

Thr-14 contacts ADP. Positions 14, 15, and 16 each coordinate ATP. Thr-14 serves as a coordination point for sn-glycerol 3-phosphate. ADP is bound at residue Arg-18. The sn-glycerol 3-phosphate site is built by Arg-84, Glu-85, Tyr-136, and Asp-246. Arg-84, Glu-85, Tyr-136, Asp-246, and Gln-247 together coordinate glycerol. ADP-binding residues include Thr-268 and Gly-311. ATP is bound by residues Thr-268, Gly-311, Gln-315, and Gly-412. Residues Gly-412 and Asn-416 each contribute to the ADP site.

It belongs to the FGGY kinase family.

It carries out the reaction glycerol + ATP = sn-glycerol 3-phosphate + ADP + H(+). It participates in polyol metabolism; glycerol degradation via glycerol kinase pathway; sn-glycerol 3-phosphate from glycerol: step 1/1. Its activity is regulated as follows. Inhibited by fructose 1,6-bisphosphate (FBP). Functionally, key enzyme in the regulation of glycerol uptake and metabolism. Catalyzes the phosphorylation of glycerol to yield sn-glycerol 3-phosphate. This is Glycerol kinase from Vibrio cholerae serotype O1 (strain ATCC 39315 / El Tor Inaba N16961).